The primary structure comprises 591 residues: DEAD-box ATP-dependent RNA helicase 17 (591 aa).

A Q motif motif is present at residues 23 to 52 (CSFTDLGLHPTLCAHLQDKMGFQAPTRIQA). A Helicase ATP-binding domain is found at 55 to 248 (IPVAMSGQHM…KISLKNPVMI (194 aa)). Position 68 to 75 (68 to 75 (AATGTGKT)) interacts with ATP. Residues 181–184 (DEAD) carry the DEAD box motif. Residues 293 to 482 (QLVQRYVKVS…SFPVNGQRLH (190 aa)) form the Helicase C-terminal domain. A disordered region spans residues 562–591 (GRSHQVQLKKRKKEQKRERPAKRRKIPAKR). The span at 568-591 (QLKKRKKEQKRERPAKRRKIPAKR) shows a compositional bias: basic residues.

Belongs to the DEAD box helicase family. DDX31/DBP7 subfamily. In terms of tissue distribution, expressed in flowers and pollen grains.

The protein resides in the nucleus. It carries out the reaction ATP + H2O = ADP + phosphate + H(+). Functionally, may play a role in organellar ribosome biogenesis and suppress 16S rRNA maturation. The sequence is that of DEAD-box ATP-dependent RNA helicase 17 from Oryza sativa subsp. japonica (Rice).